A 166-amino-acid polypeptide reads, in one-letter code: Spiderine-1a (166 aa).

Residues 1–18 form the signal peptide; sequence MKFALVLLGVCAFYLVNA. Residues 19–58 constitute a propeptide that is removed on maturation; it reads TGDLETELEASELQELQEALDLIGETPLESLEAEELEEAR. The interval 59–99 is linear cationic cytotoxin domain; sequence KFKWGKLFSTAKKLYKKGKKLSKNKNFKKALKFGKQLAKNL. In terms of domain architecture, Oxytoxin-type inhibitor cystine knot (ICK) spans 113 to 166; that stretch reads NNKCWAIGTTCSDDCDCCPEHHCHCPAGKWLPGLFRCTCQVTESDKVNKCPPAE. Disulfide bonds link cysteine 116/cysteine 130, cysteine 123/cysteine 135, cysteine 127/cysteine 162, cysteine 129/cysteine 151, and cysteine 137/cysteine 149.

Belongs to the spiderine family. Cationic/spiderine subfamily. As to expression, expressed by the venom gland.

The protein resides in the secreted. Its function is as follows. Has antimicrobial, insecticidal, cytolytic and cytotoxic activity. Active against E.coli DH5alpha, E.faecalis VKM B 871, B.subtilis VKM B 501, A.globiformis VKM Ac 1112, P.aeruginosa PAO1 and S.aureus 209P in submicromolar or low micromolar ranges. Lyses human erythrocytes. Kills HeLA and A549 cells. The protein is Spiderine-1a of Oxyopes takobius (Lynx spider).